A 250-amino-acid polypeptide reads, in one-letter code: ATP synthase subunit a (250 aa).

Helical transmembrane passes span 26-46, 84-104, 114-134, 143-163, 193-213, and 216-236; these read FTNASLFMVATVGVAAGFLYL, FFPMVFSLFMFILTANLLGMF, IIVTFALAVFVIGTVILYGFY, LFVPHGVPGALLPLVVSIEVI, FVASLSAFGALGIGGAILPLI, and VALTGLEFLVAFLQAYVFAVL.

Belongs to the ATPase A chain family. In terms of assembly, F-type ATPases have 2 components, CF(1) - the catalytic core - and CF(0) - the membrane proton channel. CF(1) has five subunits: alpha(3), beta(3), gamma(1), delta(1), epsilon(1). CF(0) has three main subunits: a(1), b(2) and c(9-12). The alpha and beta chains form an alternating ring which encloses part of the gamma chain. CF(1) is attached to CF(0) by a central stalk formed by the gamma and epsilon chains, while a peripheral stalk is formed by the delta and b chains.

It is found in the cell inner membrane. Its function is as follows. Key component of the proton channel; it plays a direct role in the translocation of protons across the membrane. In Sinorhizobium fredii (strain NBRC 101917 / NGR234), this protein is ATP synthase subunit a.